The following is a 1502-amino-acid chain: Ras guanine nucleotide exchange factor P (1502 aa).

The Calponin-homology (CH) domain maps to 84-187; it reads FIIDNQVLDW…LLYSLMKFSE (104 aa). Disordered regions lie at residues 216–242, 325–436, 456–534, and 589–935; these read AQSS…SSNE, QQQQ…PNNN, EDNT…VGRG, and TTTA…NQNN. Low complexity-rich tracts occupy residues 218 to 242, 325 to 345, 371 to 400, and 407 to 421; these read SSSS…SSNE, QQQQ…TTTT, TTSS…LLNH, and SSST…PIST. Positions 287-328 form a coiled coil; that stretch reads QQQQQQQQQQQQQQQQQQQQQQQQQQQQQQQQQQQQQQQQQQ. Residues 422-436 are compositionally biased toward polar residues; that stretch reads PSTSKSNSFQKPNNN. Positions 451–515 form a coiled coil; the sequence is EENEIEDNTN…NQNENEDEVK (65 aa). The span at 458–508 shows a compositional bias: low complexity; sequence NTNNNNNNNNNNNNNNNNNNNNNNNNNNNNNNNNTNDNINNNNKNNNNNQN. Pro residues predominate over residues 518–528; that stretch reads HSPPKVRPPLP. Low complexity-rich tracts occupy residues 589–646, 663–675, 686–719, 764–790, and 813–853; these read TTTA…NNNN, TIST…TGTI, SQPL…LSLP, NSIN…VSQS, and NSNS…NNNN. The span at 861–876 shows a compositional bias: polar residues; it reads LTMSNQSANSLKSSGN. The span at 883-935 shows a compositional bias: low complexity; that stretch reads TNGNNNISQNQNQNQNQNQNQTQNQNQNQNQNHISHSNSISSGNLNNHVNQNN. A coiled-coil region spans residues 1032–1076; the sequence is VEENKNLITRTEEMQKMIDSLMKEKKELINEKNTLASMLAKTKQQ. One can recognise an N-terminal Ras-GEF domain in the interval 1102 to 1249; that stretch reads GKYEIKGGTT…SELKLVFSTP (148 aa). A Ras-GEF domain is found at 1267–1498; the sequence is DPAEIARQLT…FNLSLICEPR (232 aa).

In terms of biological role, promotes the exchange of Ras-bound GDP by GTP. This Dictyostelium discoideum (Social amoeba) protein is Ras guanine nucleotide exchange factor P (gefP).